The sequence spans 799 residues: Oligopeptide transporter 1 (799 aa).

2 disordered regions span residues 1 to 26 (MSTIYRESDSLESEPSPTPTTIPIQI) and 43 to 64 (DVNNLTATTDEEDRDPESQKFD). The Extracellular portion of the chain corresponds to 1-108 (MSTIYRESDS…DPTIRLNHWR (108 aa)). Residues 13 to 26 (SEPSPTPTTIPIQI) are compositionally biased toward low complexity. N-linked (GlcNAc...) asparagine glycosylation is present at Asn-46. Phosphothreonine occurs at positions 48, 50, and 51. A helical membrane pass occupies residues 109 to 129 (TWFLTTVFVVVFAGVNQFFSL). The Cytoplasmic segment spans residues 130–135 (RYPSLE). The helical transmembrane segment at 136–156 (INFLVAQVVCYPIGRILALLP) threads the bilayer. The Extracellular segment spans residues 157 to 177 (DWKCSKVPFFDLNPGPFTKKE). Residues 178–198 (HAVVTIAVALTSSTAYAMYIL) traverse the membrane as a helical segment. Residues 199–210 (NAQGSFYNMKLN) are Cytoplasmic-facing. Residues 211 to 231 (VGYQFLLVWTSQMIGYGAAGL) form a helical membrane-spanning segment. At 232 to 276 (TRRWVVNPASSIWPQTLISVSLFDSLHSRKVEKTVANGWTMPRYR) the chain is on the extracellular side. Residues 277–297 (FFLIVLIGSFIWYWVPGFLFT) form a helical membrane-spanning segment. The Cytoplasmic portion of the chain corresponds to 298 to 313 (GLSYFNVILWGSKTRH). A helical membrane pass occupies residues 314–334 (NFIANTIFGTQSGLGALPITF). Topologically, residues 335 to 359 (DYTQVSQAMSGSVFATPFYVSANTY) are extracellular. The chain crosses the membrane as a helical span at residues 360–380 (ASVLIFFVIVLPCLYFTNTWY). The Cytoplasmic segment spans residues 381 to 428 (AKYMPVISGSTYDNTQNKYNVTKILNEDYSINLEKYKEYSPVFVPFSY). Residues 429 to 449 (LLSYALNFAAVIAVFVHCILY) traverse the membrane as a helical segment. The Extracellular segment spans residues 450–482 (HGKDIVAKFKDRKNGGTDIHMRIYSKNYKDCPD). Residues 483–503 (WWYLLLQIVMIGLGFVAVCCF) traverse the membrane as a helical segment. Residues 504-508 (DTKFP) lie on the Cytoplasmic side of the membrane. The helical transmembrane segment at 509–529 (AWAFVIAILISLVNFIPQGIL) threads the bilayer. The Extracellular portion of the chain corresponds to 530 to 540 (EAMTNQHVGLN). The chain crosses the membrane as a helical span at residues 541-561 (IITELICGYMLPLRPMANLLF). The Cytoplasmic portion of the chain corresponds to 562 to 590 (KLYGFIVMRQGLNLSRDLKLAMYMKVSPR). A helical transmembrane segment spans residues 591–611 (LIFAVQIYATIISGMVNVGVQ). The Extracellular segment spans residues 612 to 659 (EWMMHNIDGLCTTDQPNGFTCANGRTVFNASIIWSLPKYLFSSGRIYN). Asn-640 carries N-linked (GlcNAc...) asparagine glycosylation. A helical transmembrane segment spans residues 660-680 (PLMWFFLIGLLFPLAVYAVQW). The Cytoplasmic portion of the chain corresponds to 681 to 736 (KFPKFKFAKHIHTPVFFTGPGNIPPSTPYNYSLFFAMSFCLNLIRKRWRAWFNKYN). A helical membrane pass occupies residues 737-757 (FVMGAGVEAGVAISVVIIFLC). At 758–799 (VQYPGGKLSWWGNNVWKRTYDNDYKKFYTLKKGETFGYDKWW) the chain is on the extracellular side.

Belongs to the oligopeptide OPT transporter family.

It is found in the cell membrane. In terms of biological role, high affinity transporter for glutathione. Also transports tetra- and pentapeptides like the opioids leucine enkephalin (Tyr-Gly-Gly-Phe-Leu) and methionine enkephalin (Tyr-Gly-Gly_Phe-Met) across the cell membrane. In Saccharomyces cerevisiae (strain ATCC 204508 / S288c) (Baker's yeast), this protein is Oligopeptide transporter 1 (OPT1).